The primary structure comprises 219 residues: 7-cyano-7-deazaguanine synthase (219 aa).

9-19 (YSGGMDSFTVL) contributes to the ATP binding site. Zn(2+) is bound by residues Cys185, Cys193, Cys196, and Cys199.

It belongs to the QueC family. The cofactor is Zn(2+).

The enzyme catalyses 7-carboxy-7-deazaguanine + NH4(+) + ATP = 7-cyano-7-deazaguanine + ADP + phosphate + H2O + H(+). It participates in purine metabolism; 7-cyano-7-deazaguanine biosynthesis. In terms of biological role, catalyzes the ATP-dependent conversion of 7-carboxy-7-deazaguanine (CDG) to 7-cyano-7-deazaguanine (preQ(0)). The polypeptide is 7-cyano-7-deazaguanine synthase (Marinomonas sp. (strain MWYL1)).